Consider the following 341-residue polypeptide: S-adenosylmethionine:tRNA ribosyltransferase-isomerase (341 aa).

It belongs to the QueA family. Monomer.

Its subcellular location is the cytoplasm. It catalyses the reaction 7-aminomethyl-7-carbaguanosine(34) in tRNA + S-adenosyl-L-methionine = epoxyqueuosine(34) in tRNA + adenine + L-methionine + 2 H(+). It participates in tRNA modification; tRNA-queuosine biosynthesis. Functionally, transfers and isomerizes the ribose moiety from AdoMet to the 7-aminomethyl group of 7-deazaguanine (preQ1-tRNA) to give epoxyqueuosine (oQ-tRNA). This Clostridium botulinum (strain Loch Maree / Type A3) protein is S-adenosylmethionine:tRNA ribosyltransferase-isomerase.